The chain runs to 653 residues: Exocyst complex component 7 (653 aa).

The SEC8 and ARHQ binding stretch occupies residues 1–384 (MIPPQEASAR…TKNKLPGLIT (384 aa)). Coiled coils occupy residues 5–42 (QEAS…TKNM) and 63–85 (VHKQ…SCLD). A Phosphoserine modification is found at S133. Residues 238 to 272 (FRKSSSSSGVPYSPAIPNKRKDTPTKKPIKRPGRD) are disordered.

The protein belongs to the EXO70 family. As to quaternary structure, the exocyst complex is composed of EXOC1, EXOC2, EXOC3, EXOC4, EXOC5, EXOC6, EXOC7 and EXOC8. Interacts with ARHQ in a GTP-dependent manner. Interacts with RAB11FIP3.

It is found in the cytoplasm. It localises to the cytosol. Its subcellular location is the cell membrane. The protein localises to the midbody. The protein resides in the midbody ring. Component of the exocyst complex involved in the docking of exocytic vesicles with fusion sites on the plasma membrane. In adipocytes, plays a crucial role in targeting SLC2A4 vesicle to the plasma membrane in response to insulin, perhaps directing the vesicle to the precise site of fusion. It is required for neuron survival and plays an essential role in cortical development. The protein is Exocyst complex component 7 (Exoc7) of Rattus norvegicus (Rat).